Reading from the N-terminus, the 349-residue chain is T-cell immunoglobulin and mucin domain-containing protein 2 (349 aa).

A signal peptide spans 1-20 (MVQLQVFISGLLLLLPGAVA). At 21–275 (SYTVVQGHSV…QKLQRNPTKG (255 aa)) the chain is on the extracellular side. The 102-residue stretch at 22–123 (YTVVQGHSVT…AFYFVDYLLE (102 aa)) folds into the Ig-like V-type domain. Disulfide bonds link Cys-34–Cys-107, Cys-48–Cys-59, and Cys-54–Cys-106. N-linked (GlcNAc...) asparagine glycans are attached at residues Asn-84 and Asn-89. The disordered stretch occupies residues 128 to 271 (LPTSPPTRPT…AIPPQKLQRN (144 aa)). Residues 136-215 (PTNTGRPTTT…TSTPPTPEQT (80 aa)) show a composition bias toward low complexity. A compositionally biased stretch (polar residues) spans 222–260 (ATTYYPDQTTAEVTEAPSHTPTDWNNTATSSDDSWNSDT). The helical transmembrane segment at 276-296 (FYVGMSFAALLLLLLASTVAI) threads the bilayer. Residues 297-349 (TRYMVMRKNSGSLRFVAFPVSKIGASQNKVVEQARIEDEVYIIEDSPYFEEES) are Cytoplasmic-facing.

It belongs to the immunoglobulin superfamily. TIM family. In terms of assembly, homodimer.

The protein resides in the cell membrane. Its function is as follows. Probable receptor for SEMA4A involved in the regulation of T-cell function. The interaction with SEMA4A enhances T-cell activation. This Rattus norvegicus (Rat) protein is T-cell immunoglobulin and mucin domain-containing protein 2 (Timd2).